The sequence spans 361 residues: Hydroxycarboxylate dehydrogenase B (361 aa).

NAD(+) contacts are provided by residues histidine 48, 122–124, 178–182, histidine 234, asparagine 270, and 313–316; these read GRI, LLDYA, and GEWE.

It belongs to the LDH2/MDH2 oxidoreductase family.

The catalysed reaction is 2-hydroxyglutarate + NADP(+) = 2-oxoglutarate + NADPH + H(+). It catalyses the reaction 2-hydroxyglutarate + NAD(+) = 2-oxoglutarate + NADH + H(+). It carries out the reaction 3-phenyllactate + NADP(+) = 3-phenylpyruvate + NADPH + H(+). The enzyme catalyses 3-phenyllactate + NAD(+) = 3-phenylpyruvate + NADH + H(+). The catalysed reaction is (2R)-2-hydroxy-3-(4-hydroxyphenyl)propanoate + NAD(+) = 3-(4-hydroxyphenyl)pyruvate + NADH + H(+). It catalyses the reaction (2R)-2-hydroxy-3-(4-hydroxyphenyl)propanoate + NADP(+) = 3-(4-hydroxyphenyl)pyruvate + NADPH + H(+). It carries out the reaction (2R)-3-(3,4-dihydroxyphenyl)lactate + NADP(+) = 3-(3,4-dihydroxyphenyl)pyruvate + NADPH + H(+). The enzyme catalyses (2R)-3-(3,4-dihydroxyphenyl)lactate + NAD(+) = 3-(3,4-dihydroxyphenyl)pyruvate + NADH + H(+). Catalyzes the NAD(P)H-dependent reduction of 2-oxoglutarate, phenylpyruvate and (4-hydroxyphenyl)pyruvate, leading to the respective 2-hydroxycarboxylate in vitro. Shows a preference for NADPH over NADH as a redox partner. Do not catalyze the reverse reactions. This is Hydroxycarboxylate dehydrogenase B from Escherichia coli O157:H7.